The following is an 877-amino-acid chain: DNA polymerase I (877 aa).

Residues 177–270 form the 5'-3' exonuclease domain; the sequence is TPAQFIDLKA…LEDLVYSGPD (94 aa). A 3'-5' exonuclease domain is found at 302 to 465; that stretch reads DFTIVDQISQ…TEPILLEKLS (164 aa).

The protein belongs to the DNA polymerase type-A family. As to quaternary structure, single-chain monomer with multiple functions.

It catalyses the reaction DNA(n) + a 2'-deoxyribonucleoside 5'-triphosphate = DNA(n+1) + diphosphate. Functionally, in addition to polymerase activity, this DNA polymerase exhibits 3'-5' and 5'-3' exonuclease activity. The polypeptide is DNA polymerase I (polA) (Streptococcus pneumoniae serotype 4 (strain ATCC BAA-334 / TIGR4)).